Consider the following 194-residue polypeptide: Inner membrane-spanning protein YciB (194 aa).

The next 5 helical transmembrane spans lie at 1–21, 49–69, 77–97, 120–140, and 150–170; these read MKLL…KTTN, EKMH…TILF, WKPS…GWVS, LNYS…YVAY, and FKLF…GVYI.

Belongs to the YciB family.

Its subcellular location is the cell inner membrane. Its function is as follows. Plays a role in cell envelope biogenesis, maintenance of cell envelope integrity and membrane homeostasis. This is Inner membrane-spanning protein YciB from Hahella chejuensis (strain KCTC 2396).